We begin with the raw amino-acid sequence, 683 residues long: MLRIENTVCKSACRVDSATAQPVYSSFDGENFKAEIHSKLDSFERKLNASPTYRDEEGGGNPEHYETLSQEINDLQSQIENLSLEVENLQGSSSSPSNVAAALAELSQSIRTIKEQLEANRKERYNLTVTVANLTAAVNAAKKTGSESTTATATTTTNYETQLKAFEAQIKALDNQLQTQKNLVQTTSVEAKNDRDSLRKTIEVIRLTVKTLQDQVESQTGPKKRRKSPIENQPTAGSELATLTTNLTFLTQRVEKLSQGVATHTTAMFTLEETMKKVHTTLQEATASNTNNIDAIRTRVQELADKIALFDQVQYSVGYEMAKKNPDSTKLRTDLDSAISTVNEEKKSLLTVKDSVQSLKTQLDELKRTLENDGDVSSLRQTVHDMASSIRDETATIYNKINALEEGLKRGGQTTTTPLTQLQTRVEEIDKTIVKWNNQHGEWTTRLNKLEAGVSNNQTLMNRFIQQVNGDVNPLKELPAELETFKMTITNTWAQLNKKFLDFSAKTDTSVDNFTKKFTEIHPQIASLVDKMDQQIRDNPHTTEKLMDEIRQLKSAMTRLGTQSSGKPIFSINTKSSYNEKSKKTIFGHPGIIFPETVKISSIYITLAAKEADGKEDARLFELTATSTHNNITSTIKQFEKKCTEETILEDYNPPLVIDAQTKLVLSCNQKVFGVAIFTLQYS.

Coiled-coil stretches lie at residues 62–124 (PEHY…RKER), 155–259 (TTTN…KLSQ), and 346–376 (KKSLLTVKDSVQSLKTQLDELKRTLENDGDV). The tract at residues 213–237 (QDQVESQTGPKKRRKSPIENQPTAG) is disordered.

This is an uncharacterized protein from Invertebrate iridescent virus 3 (IIV-3).